Reading from the N-terminus, the 178-residue chain is DNA-directed RNA polymerase V subunit 7 (178 aa).

The protein belongs to the eukaryotic RPB7/RPC8 RNA polymerase subunit family. In terms of assembly, component of the RNA polymerase V complex.

Its subcellular location is the nucleus. In terms of biological role, DNA-dependent RNA polymerase catalyzes the transcription of DNA into RNA using the four ribonucleoside triphosphates as substrates. Component of RNA polymerase V involved in RNA-directed DNA methylation-dependent (RdDM) silencing of endogenous repeated sequences, including transposable elements. This Arabidopsis thaliana (Mouse-ear cress) protein is DNA-directed RNA polymerase V subunit 7 (NRPE7).